A 487-amino-acid chain; its full sequence is G-patch domain and KOW motifs-containing protein (487 aa).

Disordered regions lie at residues 65-121, 181-232, and 295-367; these read HKNR…PLLM, VKPL…TGSA, and KVHQ…RPEP. A coiled-coil region spans residues 88–116; that stretch reads AVLSQAVKELIEESRRAQEDNSETNQTLS. Composition is skewed to basic and acidic residues over residues 96–106 and 200–209; these read ELIEESRRAQE and SALKHLEPQK. Residues 154 to 200 form the G-patch domain; that stretch reads VQQYGMAMLRGMGWKEGEGIGRTFKQDVKPLEQKLRPKGLGLGADRS. The 28-residue stretch at 226–253 folds into the KOW 1 domain; sequence GLGTGSAVQIQSGAYKDMYGKVEGIDPD. Composition is skewed to basic and acidic residues over residues 295 to 333 and 352 to 367; these read KVHQ…DVKL and RSPE…RPEP. Positions 428–455 constitute a KOW 2 domain; that stretch reads PKEEGEHVMVVLGKYRGMVGKILHRDKQ.

This sequence belongs to the MOS2 family. Component of the minor spliceosome, which splices U12-type introns.

It localises to the nucleus. Its function is as follows. RNA-binding protein involved in pre-mRNA splicing. The sequence is that of G-patch domain and KOW motifs-containing protein (gpkow) from Xenopus laevis (African clawed frog).